The primary structure comprises 405 residues: Glucan 1,3-beta-glucosidase A (405 aa).

An N-terminal signal peptide occupies residues 1–14 (MLPLLLCIVPYCWS). The active-site Proton donor is the Glu199. 2 disulfides stabilise this stretch: Cys280/Cys405 and Cys306/Cys332. Glu298 acts as the Nucleophile in catalysis.

It belongs to the glycosyl hydrolase 5 (cellulase A) family. In terms of assembly, monomer. It depends on Mn(2+) as a cofactor.

It localises to the secreted. The enzyme catalyses Successive hydrolysis of beta-D-glucose units from the non-reducing ends of (1-&gt;3)-beta-D-glucans, releasing alpha-glucose.. Beta-glucanases participate in the metabolism of beta-glucan, the main structural component of the cell wall. It could also function biosynthetically as a transglycosylase. In Aspergillus oryzae (strain ATCC 42149 / RIB 40) (Yellow koji mold), this protein is Glucan 1,3-beta-glucosidase A (exgA).